The primary structure comprises 201 residues: MQPFTSHTGLAVMIDSANIDTDQIIPKQFLSKVTRDGFGVHLFHDWRYLDDAGEVPNPDFTLNKPRYSGASILLAQENFGCGSSREHAPWALADFGLRAIIAPSFADIFYGNSINNGLLPVKLSANEVRQLMDEVASEEGAQITVDLTTCKVTSPLGAEFSFTLAESARHKLLNGLDAIGLTLSHGIQIGEYESQIPSWRC.

The protein belongs to the LeuD family. LeuD type 1 subfamily. As to quaternary structure, heterodimer of LeuC and LeuD.

The enzyme catalyses (2R,3S)-3-isopropylmalate = (2S)-2-isopropylmalate. Its pathway is amino-acid biosynthesis; L-leucine biosynthesis; L-leucine from 3-methyl-2-oxobutanoate: step 2/4. In terms of biological role, catalyzes the isomerization between 2-isopropylmalate and 3-isopropylmalate, via the formation of 2-isopropylmaleate. The polypeptide is 3-isopropylmalate dehydratase small subunit (Shewanella sp. (strain ANA-3)).